A 227-amino-acid chain; its full sequence is Cytochrome c oxidase subunit 2 (227 aa).

At 1-14 the chain is on the mitochondrial intermembrane side; that stretch reads MAYPFQLGLQDATS. A helical membrane pass occupies residues 15–45; it reads PIMEELLHFHDHTLMIVFLISSLVLYIISLM. The Mitochondrial matrix segment spans residues 46-59; that stretch reads LTTKLTHTSTMDAQ. The helical transmembrane segment at 60-87 threads the bilayer; the sequence is EVETVWTILPAIILILIALPSLRILYMM. Topologically, residues 88 to 227 are mitochondrial intermembrane; it reads DEINNPSLTV…YFETWSAVMV (140 aa). 6 residues coordinate Cu cation: His-161, Cys-196, Glu-198, Cys-200, His-204, and Met-207. Glu-198 lines the Mg(2+) pocket. Tyr-218 is subject to Phosphotyrosine.

Belongs to the cytochrome c oxidase subunit 2 family. Component of the cytochrome c oxidase (complex IV, CIV), a multisubunit enzyme composed of 14 subunits. The complex is composed of a catalytic core of 3 subunits MT-CO1, MT-CO2 and MT-CO3, encoded in the mitochondrial DNA, and 11 supernumerary subunits COX4I, COX5A, COX5B, COX6A, COX6B, COX6C, COX7A, COX7B, COX7C, COX8 and NDUFA4, which are encoded in the nuclear genome. The complex exists as a monomer or a dimer and forms supercomplexes (SCs) in the inner mitochondrial membrane with NADH-ubiquinone oxidoreductase (complex I, CI) and ubiquinol-cytochrome c oxidoreductase (cytochrome b-c1 complex, complex III, CIII), resulting in different assemblies (supercomplex SCI(1)III(2)IV(1) and megacomplex MCI(2)III(2)IV(2)). Found in a complex with TMEM177, COA6, COX18, COX20, SCO1 and SCO2. Interacts with TMEM177 in a COX20-dependent manner. Interacts with COX20. Interacts with COX16. Cu cation serves as cofactor.

It localises to the mitochondrion inner membrane. It catalyses the reaction 4 Fe(II)-[cytochrome c] + O2 + 8 H(+)(in) = 4 Fe(III)-[cytochrome c] + 2 H2O + 4 H(+)(out). Component of the cytochrome c oxidase, the last enzyme in the mitochondrial electron transport chain which drives oxidative phosphorylation. The respiratory chain contains 3 multisubunit complexes succinate dehydrogenase (complex II, CII), ubiquinol-cytochrome c oxidoreductase (cytochrome b-c1 complex, complex III, CIII) and cytochrome c oxidase (complex IV, CIV), that cooperate to transfer electrons derived from NADH and succinate to molecular oxygen, creating an electrochemical gradient over the inner membrane that drives transmembrane transport and the ATP synthase. Cytochrome c oxidase is the component of the respiratory chain that catalyzes the reduction of oxygen to water. Electrons originating from reduced cytochrome c in the intermembrane space (IMS) are transferred via the dinuclear copper A center (CU(A)) of subunit 2 and heme A of subunit 1 to the active site in subunit 1, a binuclear center (BNC) formed by heme A3 and copper B (CU(B)). The BNC reduces molecular oxygen to 2 water molecules using 4 electrons from cytochrome c in the IMS and 4 protons from the mitochondrial matrix. The chain is Cytochrome c oxidase subunit 2 (MT-CO2) from Lycalopex vetulus (Hoary fox).